A 306-amino-acid chain; its full sequence is Bifunctional protein FolD (306 aa).

Residues 169–171 (GRS), serine 194, and isoleucine 235 contribute to the NADP(+) site.

Belongs to the tetrahydrofolate dehydrogenase/cyclohydrolase family. As to quaternary structure, homodimer.

The enzyme catalyses (6R)-5,10-methylene-5,6,7,8-tetrahydrofolate + NADP(+) = (6R)-5,10-methenyltetrahydrofolate + NADPH. It carries out the reaction (6R)-5,10-methenyltetrahydrofolate + H2O = (6R)-10-formyltetrahydrofolate + H(+). The protein operates within one-carbon metabolism; tetrahydrofolate interconversion. Catalyzes the oxidation of 5,10-methylenetetrahydrofolate to 5,10-methenyltetrahydrofolate and then the hydrolysis of 5,10-methenyltetrahydrofolate to 10-formyltetrahydrofolate. This Thermosynechococcus vestitus (strain NIES-2133 / IAM M-273 / BP-1) protein is Bifunctional protein FolD.